The chain runs to 23 residues: Elongation factor Tu (23 aa).

It belongs to the GTP-binding elongation factor family. EF-Tu/EF-1A subfamily. As to quaternary structure, monomer. The N-terminus is blocked. In terms of processing, the C-terminus may be subjected to proteolysis.

The protein localises to the cytoplasm. In terms of biological role, this protein promotes the GTP-dependent binding of aminoacyl-tRNA to the A-site of ribosomes during protein biosynthesis. The sequence is that of Elongation factor Tu (tuf) from Delftia acidovorans (Pseudomonas acidovorans).